The chain runs to 95 residues: Large ribosomal subunit protein uL23 (95 aa).

The protein belongs to the universal ribosomal protein uL23 family. In terms of assembly, part of the 50S ribosomal subunit. Contacts protein L29 and trigger factor when it is bound to the ribosome.

In terms of biological role, one of the early assembly protein it binds 23S rRNA. One of the proteins that surrounds the polypeptide exit tunnel on the outside of the subunit. Forms the main docking site for trigger factor binding to the ribosome. This chain is Large ribosomal subunit protein uL23, found in Deinococcus radiodurans (strain ATCC 13939 / DSM 20539 / JCM 16871 / CCUG 27074 / LMG 4051 / NBRC 15346 / NCIMB 9279 / VKM B-1422 / R1).